The chain runs to 217 residues: Glycerol-3-phosphate acyltransferase (217 aa).

6 helical membrane passes run 3–23 (IVILLLVAYLLGSIPSGVWIG), 56–76 (VLLMDILKGTLATSLPYLFGL), 78–98 (GVNPLFFGVAAVLGHTFPIFA), 120–140 (FFIYSALIFVICLYLTSMVSL), 142–162 (SMISAVLITLSTIILPFTVPA), and 163–183 (ILPTFNWLLTVIAIALTTFIF).

Belongs to the PlsY family. As to quaternary structure, probably interacts with PlsX.

The protein resides in the cell membrane. It catalyses the reaction an acyl phosphate + sn-glycerol 3-phosphate = a 1-acyl-sn-glycero-3-phosphate + phosphate. Its pathway is lipid metabolism; phospholipid metabolism. Catalyzes the transfer of an acyl group from acyl-phosphate (acyl-PO(4)) to glycerol-3-phosphate (G3P) to form lysophosphatidic acid (LPA). This enzyme utilizes acyl-phosphate as fatty acyl donor, but not acyl-CoA or acyl-ACP. The chain is Glycerol-3-phosphate acyltransferase from Enterococcus faecalis (strain ATCC 700802 / V583).